The following is a 38-amino-acid chain: Toxin BmK NSPK (38 aa).

3 disulfide bridges follow: Cys7–Cys27, Cys13–Cys32, and Cys17–Cys34.

In terms of tissue distribution, expressed by the venom gland.

The protein resides in the secreted. In terms of biological role, blocks voltage-gated potassium (Kv) channel and augments neurite extension via NGF/TrkA signaling pathway. The chain is Toxin BmK NSPK from Olivierus martensii (Manchurian scorpion).